A 476-amino-acid polypeptide reads, in one-letter code: MVLNRYALITNCNHKTLGLYYLWFSFLFGTYGFLLSVILRTELYSSSLRIIAQENVNLYNMIFTIHGIIMIFFNIMPGLFGGFGNYYLPILCGSSELAYPRINSISLLLQPIAFILVILSTAAEFGGGTGWTLYPPLSTSLMSLSPVAVDVIIIGLLVSGIASIMSSLNFVTTVLHLRAKGLSLGVLSVSTWSIIITSIMLLLTLPVLTGGVLMLLSDLHFNTLFFDPTFAGDPILYQHLFWFFGHPEVYILILPAFGVISHVISTNYCRSLFGNQSMILAMGCIAVLGSVVWVHHMYTTGLEVDTRAFFTSTTILISIPTGTKVFNWLCTYMSSNFGITHSSSLLCLLFICTFTFGGTTGVILGNGAIDIALHDTYYVIAHFHFVLSIGAIIALFTCVSFFQESFFGKTLRENTLIVLWSILFFIGVILTFLPMHFLGFNVMPRRIPDYPDALNGWNMICSIGSTMTLFGLLIFK.

The chain crosses the membrane as a helical span at residues 19–39; the sequence is LYYLWFSFLFGTYGFLLSVIL. Glutamate 42 contributes to the Ca(2+) binding site. 8 consecutive transmembrane segments (helical) span residues 61-81, 105-125, 144-164, 194-214, 240-260, 278-298, 309-329, and 345-365; these read MIFT…GLFG, ISLL…AAEF, LSPV…IASI, IIIT…GVLM, LFWF…FGVI, MILA…HHMY, FFTS…FNWL, and LLCL…VILG. Histidine 66 provides a ligand contact to Fe(II)-heme a. Position 246 (histidine 246) interacts with Cu cation. The 1'-histidyl-3'-tyrosine (His-Tyr) cross-link spans 246–250; that stretch reads HPEVY. Tyrosine 250 lines the O2 pocket. Histidine 295 and histidine 296 together coordinate Cu cation. Mg(2+) is bound by residues histidine 374 and aspartate 375. Helical transmembrane passes span 379 to 399 and 415 to 435; these read VIAH…FTCV and TLIV…FLPM. Histidine 382 provides a ligand contact to heme a3. Histidine 384 is a binding site for Fe(II)-heme a. A Ca(2+)-binding site is contributed by proline 448. A helical transmembrane segment spans residues 455–475; sequence NGWNMICSIGSTMTLFGLLIF.

Belongs to the heme-copper respiratory oxidase family. As to quaternary structure, component of the cytochrome c oxidase (complex IV, CIV), a multisubunit enzyme composed of a catalytic core of 3 subunits and several supernumerary subunits. The complex exists as a monomer or a dimer and forms supercomplexes (SCs) in the inner mitochondrial membrane with ubiquinol-cytochrome c oxidoreductase (cytochrome b-c1 complex, complex III, CIII). Heme serves as cofactor. Cu cation is required as a cofactor.

The protein localises to the mitochondrion inner membrane. The enzyme catalyses 4 Fe(II)-[cytochrome c] + O2 + 8 H(+)(in) = 4 Fe(III)-[cytochrome c] + 2 H2O + 4 H(+)(out). The protein operates within energy metabolism; oxidative phosphorylation. Its function is as follows. Component of the cytochrome c oxidase, the last enzyme in the mitochondrial electron transport chain which drives oxidative phosphorylation. The respiratory chain contains 3 multisubunit complexes succinate dehydrogenase (complex II, CII), ubiquinol-cytochrome c oxidoreductase (cytochrome b-c1 complex, complex III, CIII) and cytochrome c oxidase (complex IV, CIV), that cooperate to transfer electrons derived from NADH and succinate to molecular oxygen, creating an electrochemical gradient over the inner membrane that drives transmembrane transport and the ATP synthase. Cytochrome c oxidase is the component of the respiratory chain that catalyzes the reduction of oxygen to water. Electrons originating from reduced cytochrome c in the intermembrane space (IMS) are transferred via the dinuclear copper A center (CU(A)) of subunit 2 and heme A of subunit 1 to the active site in subunit 1, a binuclear center (BNC) formed by heme A3 and copper B (CU(B)). The BNC reduces molecular oxygen to 2 water molecules using 4 electrons from cytochrome c in the IMS and 4 protons from the mitochondrial matrix. This chain is Cytochrome c oxidase subunit 1 (COI), found in Plasmodium berghei.